We begin with the raw amino-acid sequence, 547 residues long: Probable aquaporin-5 (547 aa).

Residues 1–13 (MSSSILNNRSARS) are compositionally biased toward polar residues. Residues 1-208 (MSSSILNNRS…DPRIPPNDRR (208 aa)) form a disordered region. The Cytoplasmic segment spans residues 1-269 (MSSSILNNRS…QWMNSNFKNH (269 aa)). The span at 15 to 32 (PAGANPAFNPPAEASSSS) shows a compositional bias: low complexity. 2 stretches are compositionally biased toward basic and acidic residues: residues 152–169 (EYER…DRYT) and 198–208 (DDPRIPPNDRR). A helical transmembrane segment spans residues 270 to 290 (FVAGVGEFIGTTMFLFFAFAG). Over 291 to 316 (TEVANIQADTTNRTTTGESTGSLNVS) the chain is Extracellular. 2 N-linked (GlcNAc...) asparagine glycosylation sites follow: Asn-302 and Asn-314. The chain crosses the membrane as a helical span at residues 317-337 (KLLYISIIFGFSLMVNVWVFF). The Cytoplasmic segment spans residues 338 to 363 (RISGGLFNPAVTMAMLMVKAISVTRA). Positions 345-347 (NPA) match the NPA 1 motif. Residues 364-384 (IVLFLAQILGSMLASVVVRYL) traverse the membrane as a helical segment. The Extracellular segment spans residues 385 to 400 (FPETFNVRTTLGGGAS). The chain crosses the membrane as a helical span at residues 401–421 (LVQGVFIEALLTAELVFTIFM). Over 422–428 (LAKEKHR) the chain is Cytoplasmic. The chain crosses the membrane as a helical span at residues 429 to 449 (ATFIAPVGIGLALFIAEMVGV). At 450–475 (QFTGGSLNPARSFGPCVITGSFDTEH) the chain is on the extracellular side. The NPA 2 signature appears at 457–459 (NPA). Residues 476–496 (WIYWVGPAIGSLIAVCFYWFI) form a helical membrane-spanning segment. At 497–547 (KTLEYEMANPGADGDDLNDPTKNPEKRAEIQASKPVPTAAFGSGKTASILS) the chain is on the cytoplasmic side. The disordered stretch occupies residues 510-547 (GDDLNDPTKNPEKRAEIQASKPVPTAAFGSGKTASILS).

Belongs to the MIP/aquaporin (TC 1.A.8) family.

It localises to the membrane. The catalysed reaction is H2O(in) = H2O(out). Probable water channel that may have redundant functions with FgAQP3. The chain is Probable aquaporin-5 from Gibberella zeae (strain ATCC MYA-4620 / CBS 123657 / FGSC 9075 / NRRL 31084 / PH-1) (Wheat head blight fungus).